Reading from the N-terminus, the 66-residue chain is ATP synthase F(0) complex subunit 8 (66 aa).

Residues 8–24 (IWLLAVVIVLTTLMIFL) form a helical membrane-spanning segment. K54 is subject to N6-acetyllysine; alternate. At K54 the chain carries N6-succinyllysine; alternate. N6-acetyllysine is present on K57.

The protein belongs to the ATPase protein 8 family. Component of the ATP synthase complex composed at least of ATP5F1A/subunit alpha, ATP5F1B/subunit beta, ATP5MC1/subunit c (homooctomer), MT-ATP6/subunit a, MT-ATP8/subunit 8, ATP5ME/subunit e, ATP5MF/subunit f, ATP5MG/subunit g, ATP5MK/subunit k, ATP5MJ/subunit j, ATP5F1C/subunit gamma, ATP5F1D/subunit delta, ATP5F1E/subunit epsilon, ATP5PF/subunit F6, ATP5PB/subunit b, ATP5PD/subunit d, ATP5PO/subunit OSCP. ATP synthase complex consists of a soluble F(1) head domain (subunits alpha(3) and beta(3)) - the catalytic core - and a membrane F(0) domain - the membrane proton channel (subunits c, a, 8, e, f, g, k and j). These two domains are linked by a central stalk (subunits gamma, delta, and epsilon) rotating inside the F1 region and a stationary peripheral stalk (subunits F6, b, d, and OSCP). Interacts with PRICKLE3.

Its subcellular location is the mitochondrion membrane. Functionally, subunit 8, of the mitochondrial membrane ATP synthase complex (F(1)F(0) ATP synthase or Complex V) that produces ATP from ADP in the presence of a proton gradient across the membrane which is generated by electron transport complexes of the respiratory chain. ATP synthase complex consist of a soluble F(1) head domain - the catalytic core - and a membrane F(1) domain - the membrane proton channel. These two domains are linked by a central stalk rotating inside the F(1) region and a stationary peripheral stalk. During catalysis, ATP synthesis in the catalytic domain of F(1) is coupled via a rotary mechanism of the central stalk subunits to proton translocation. In vivo, can only synthesize ATP although its ATP hydrolase activity can be activated artificially in vitro. Part of the complex F(0) domain. The chain is ATP synthase F(0) complex subunit 8 from Loxodonta africana (African elephant).